The following is a 338-amino-acid chain: MTNSVFQGRSFLAEKDFTRAELEYLIGLSAHLKDLKKRNIEHRYLAGKNIALLFEKTSTRTRAAFTTAAIDLGAHPEYLGANDIQLGKKESTEDTAKVLGRMFDGIEFRGFSQRMVEELAEFSGVPVWNGLTDEWHPTQMLADYLTVQENFGRLEGLTLVYCGDGRNNVANSLLVTGAILGVNVHIFSPKELFPEQEIVELAEGFAKESGAHILITEDADEAVKGADVLYTDVWVSMGEEDKFAERVALLKPYQVNMDLVKKADNEDLIFLHCLPAFHDTNTVYGKDVAEKFGVEEMEVTDEVFRSKYARHFDQAENRMHTIKAVMAATLGNLYIPKV.

Residues 58–61 (STRT), Q85, R109, and 136–139 (HPTQ) contribute to the carbamoyl phosphate site. L-ornithine contacts are provided by residues N168, D232, and 236-237 (SM). Residues 273-274 (CL) and R318 contribute to the carbamoyl phosphate site.

The protein belongs to the aspartate/ornithine carbamoyltransferase superfamily. OTCase family.

The protein resides in the cytoplasm. It catalyses the reaction carbamoyl phosphate + L-ornithine = L-citrulline + phosphate + H(+). Its pathway is amino-acid degradation; L-arginine degradation via ADI pathway; carbamoyl phosphate from L-arginine: step 2/2. Its function is as follows. Reversibly catalyzes the transfer of the carbamoyl group from carbamoyl phosphate (CP) to the N(epsilon) atom of ornithine (ORN) to produce L-citrulline. The polypeptide is Ornithine carbamoyltransferase, catabolic (Streptococcus gordonii (strain Challis / ATCC 35105 / BCRC 15272 / CH1 / DL1 / V288)).